Here is a 288-residue protein sequence, read N- to C-terminus: Fructokinase (288 aa).

Position 131 (threonine 131) interacts with ATP. Histidine 154, cysteine 169, histidine 172, and cysteine 175 together coordinate Zn(2+). ATP contacts are provided by residues proline 183 and 231-235 (GVMNQ).

The protein belongs to the ROK (NagC/XylR) family. It depends on Mg(2+) as a cofactor.

The catalysed reaction is D-fructose + ATP = D-fructose 6-phosphate + ADP + H(+). Its activity is regulated as follows. Inhibition by zinc ions. The polypeptide is Fructokinase (scrK) (Pediococcus pentosaceus).